Reading from the N-terminus, the 257-residue chain is Transmembrane protein 101 (257 aa).

A run of 8 helical transmembrane segments spans residues 21-40 (VLLT…LYAE), 52-72 (VPYL…MSFG), 77-97 (WFAL…YVGG), 110-130 (YSRT…AGEL), 139-159 (SLQS…AYSL), 182-202 (LFFV…YVTL), 206-226 (ILAV…AYWH), and 233-253 (FWNQ…AVIL).

It localises to the membrane. Functionally, may activate NF-kappa-B signaling pathways. In Bos taurus (Bovine), this protein is Transmembrane protein 101 (TMEM101).